Here is a 299-residue protein sequence, read N- to C-terminus: Taste receptor type 2 member 5 (299 aa).

Position 1 (Met-1) is a topological domain, extracellular. Residues 2–22 (LSAGLGLLMLVAVIEFLIGLI) form a helical membrane-spanning segment. Residues 23 to 45 (GNGILVVWSLREWIRKFSWSSYN) lie on the Cytoplasmic side of the membrane. A helical transmembrane segment spans residues 46–66 (LIILGLAGCRFLLQWLIILDL). The Extracellular portion of the chain corresponds to 67–82 (SLFPLFQSSSWLRYLN). Residues 83–103 (VFWVLVSQASLWFATFLSVFY) traverse the membrane as a helical segment. Residues 104–127 (CKKITTFDRPAYLWLKQRAYNLSL) lie on the Cytoplasmic side of the membrane. The chain crosses the membrane as a helical span at residues 128-148 (WCLLGYFIISLLLTVQVGLTV). Residues 149 to 175 (HHPPQGNSSIRYPFEHWQYLYVFQLNS) are Extracellular-facing. Residue Asn-155 is glycosylated (N-linked (GlcNAc...) asparagine). The chain crosses the membrane as a helical span at residues 176–196 (GSYLPLMVFLVSSGMLIISLY). The Cytoplasmic segment spans residues 197 to 223 (THHKKMKVHSAGRRDARAKAHITALKS). The helical transmembrane segment at 224-244 (LGCFLLLHLVYIVASPFSITS) threads the bilayer. Residues 245 to 253 (KTYPPDLTS) lie on the Extracellular side of the membrane. A helical transmembrane segment spans residues 254-274 (VFIWETLMAAYPSLHSLMLIM). Residues 275–299 (GIPRVKQTCQKILWKTVCARRCWGP) lie on the Cytoplasmic side of the membrane.

Belongs to the G-protein coupled receptor T2R family.

The protein localises to the membrane. In terms of biological role, receptor that may play a role in the perception of bitterness and is gustducin-linked. May play a role in sensing the chemical composition of the gastrointestinal content. The activity of this receptor may stimulate alpha gustducin, mediate PLC-beta-2 activation and lead to the gating of TRPM5. This is Taste receptor type 2 member 5 (TAS2R5) from Papio hamadryas (Hamadryas baboon).